A 578-amino-acid polypeptide reads, in one-letter code: MSISRRSYEQFDEMKSENQENNSKKKSSERLKKLDPDKFVEAYGAYGKYQIFTYVLVQTLNFFYSSSMYIMSFVQLNLEKQCEYKNETIPISETCQIETESSKAFGNLNGEYCGIAENTLVNVTNQKASTNLLVDFDLSCSHWFFQEFGLTIFTIGAVIAVPFMSMLADRYGRKPIIVTTAILAFLANMAASFSPNFAIFLILRAFIGACSDSYLSVASVATCEYLSEKARAWITVVYNVAWSLGMVWTLLVTLMTDDWRWRYFIVSLPGVYGFALWYFLPESPHWLITKNKTEKLKKYIKTANRVNNVSPEFNDCQQSSHHEEKHESFKALLGSKKLIWLLFANGFIEMVISLVYFAISFMSVELGGDQVQAFLYSSLIEIPAGLAVIPLMMKMGRKMIVIWCLVFQTLALIGVTVFLDSYEFKLVIMLVAKVMATIIYSVHPIWATEQFPTSVRSLCFSLMNIPQSMGIIMSPYVKHIVMSPNWIPFVVIALFSFISATLAFMLHETKNKKLPTDIESLSYPSETNDLSAYRRSKSSSSSVSALSKTSVRSKKTLSSESVSKKLDTVNFSDKEYRI.

Residues 1–30 (MSISRRSYEQFDEMKSENQENNSKKKSSER) form a disordered region. The next 11 helical transmembrane spans lie at 51-71 (IFTYVLVQTLNFFYSSSMYIM), 148-168 (FGLTIFTIGAVIAVPFMSMLA), 182-202 (ILAFLANMAASFSPNFAIFLI), 232-252 (AWITVVYNVAWSLGMVWTLLV), 263-283 (YFIVSLPGVYGFALWYFLPES), 339-359 (IWLLFANGFIEMVISLVYFAI), 373-393 (AFLYSSLIEIPAGLAVIPLMM), 399-419 (MIVIWCLVFQTLALIGVTVFL), 426-446 (LVIMLVAKVMATIIYSVHPIW), 457-477 (SLCFSLMNIPQSMGIIMSPYV), and 486-506 (WIPFVVIALFSFISATLAFML). A compositionally biased stretch (low complexity) spans 532–550 (AYRRSKSSSSSVSALSKTS). The tract at residues 532–561 (AYRRSKSSSSSVSALSKTSVRSKKTLSSES) is disordered.

This sequence belongs to the major facilitator superfamily. Sugar transporter (TC 2.A.1.1) family.

Its subcellular location is the membrane. This chain is Putative transporter B0361.11, found in Caenorhabditis elegans.